Here is a 125-residue protein sequence, read N- to C-terminus: SKP1-like protein 7 (125 aa).

Residues 94–125 (MNAAYDLHIKSLLALAYQTVADMVNDNKWAFE) form an interaction with the F-box domain of F-box proteins region.

The protein belongs to the SKP1 family. In terms of assembly, part of a SCF (SKP1-cullin-F-box) protein ligase complex. Restricted to siliques.

It is found in the nucleus. It functions in the pathway protein modification; protein ubiquitination. Its function is as follows. Involved in ubiquitination and subsequent proteasomal degradation of target proteins. Together with CUL1, RBX1 and a F-box protein, it forms a SCF E3 ubiquitin ligase complex. The functional specificity of this complex depends on the type of F-box protein. In the SCF complex, it serves as an adapter that links the F-box protein to CUL1. The chain is SKP1-like protein 7 (ASK7) from Arabidopsis thaliana (Mouse-ear cress).